The primary structure comprises 99 residues: Putative type 4B encapsulin shell protein PF1875 (99 aa).

It belongs to the encapsulin family. Family 4B subfamily. May self-assemble into facets and potentially into larger complexes.

The protein localises to the encapsulin nanocompartment. May be the encapsulin shell protein in a type 4 A-domain encapsulin nanocompartment system. Its cargo may be upstream glyceraldehyde-3-phosphate dehydrogenase (AC P61879). The protein is Putative type 4B encapsulin shell protein PF1875 of Pyrococcus furiosus (strain ATCC 43587 / DSM 3638 / JCM 8422 / Vc1).